We begin with the raw amino-acid sequence, 274 residues long: DNA-directed RNA polymerase subunit Rpo3 (274 aa).

[3Fe-4S] cluster-binding residues include C202, C205, and C208.

Belongs to the archaeal Rpo3/eukaryotic RPB3 RNA polymerase subunit family. In terms of assembly, part of the RNA polymerase complex. Requires [3Fe-4S] cluster as cofactor.

It localises to the cytoplasm. It catalyses the reaction RNA(n) + a ribonucleoside 5'-triphosphate = RNA(n+1) + diphosphate. Its function is as follows. DNA-dependent RNA polymerase (RNAP) catalyzes the transcription of DNA into RNA using the four ribonucleoside triphosphates as substrates. The chain is DNA-directed RNA polymerase subunit Rpo3 from Methanobrevibacter smithii (strain ATCC 35061 / DSM 861 / OCM 144 / PS).